A 181-amino-acid chain; its full sequence is Sodium/potassium-transporting ATPase subunit beta-1-interacting protein 3 (181 aa).

Transmembrane regions (helical) follow at residues 2–22, 35–55, 62–82, and 152–172; these read GCCTGRCSLVCLCALQLLSAL, APILGNFLHIIVVILGLFGTI, IMVYTVWTALWVTWNVFIICF, and VQILLSLVGFVYACYVISISM.

This sequence belongs to the NKAIN family. As to quaternary structure, interacts with ATP1B1. In terms of tissue distribution, detected in the brain only and specifically in neurons. Expressed in multiple regions such as cerebral cortex, thalamus, hippocampus, olfactory bulb and brainstem as well as in cerebellum with low expression in granular cell layer.

It localises to the cell membrane. This Mus musculus (Mouse) protein is Sodium/potassium-transporting ATPase subunit beta-1-interacting protein 3 (Nkain3).